A 147-amino-acid polypeptide reads, in one-letter code: Austinoid biosynthesis cluster protein H (147 aa).

Belongs to the trt14 isomerase family. In terms of assembly, homodimer.

The protein operates within secondary metabolite biosynthesis; terpenoid biosynthesis. Part of the gene cluster that mediates the biosynthesis of calidodehydroaustin, a fungal meroterpenoid. The first step of the pathway is the synthesis of 3,5-dimethylorsellinic acid by the polyketide synthase ausA. 3,5-dimethylorsellinic acid is then prenylated by the polyprenyl transferase ausN. Further epoxidation by the FAD-dependent monooxygenase ausM and cyclization by the probable terpene cyclase ausL lead to the formation of protoaustinoid A. Protoaustinoid A is then oxidized to spiro-lactone preaustinoid A3 by the combined action of the FAD-binding monooxygenases ausB and ausC, and the dioxygenase ausE. Acid-catalyzed keto-rearrangement and ring contraction of the tetraketide portion of preaustinoid A3 by ausJ lead to the formation of preaustinoid A4. The aldo-keto reductase ausK, with the help of ausH, is involved in the next step by transforming preaustinoid A4 into isoaustinone which is in turn hydroxylated by the P450 monooxygenase ausI to form austinolide. The cytochrome P450 monooxygenase ausG modifies austinolide to austinol. Austinol is further acetylated to austin by the O-acetyltransferase ausP, which spontaneously changes to dehydroaustin. The cytochrome P450 monooxygenase ausR then converts dehydroaustin is into 7-dehydrodehydroaustin. The hydroxylation catalyzed by ausR permits the O-acetyltransferase ausQ to add an additional acetyl group to the molecule, leading to the formation of acetoxydehydroaustin. The short chain dehydrogenase ausT catalyzes the reduction of the double bond present between carbon atoms 1 and 2 to convert 7-dehydrodehydroaustin into 1,2-dihydro-7-hydroxydehydroaustin. AusQ catalyzes not only an acetylation reaction but also the addition of the PKS ausV diketide product to 1,2-dihydro-7-hydroxydehydroaustin, forming precalidodehydroaustin. Finally, the iron/alpha-ketoglutarate-dependent dioxygenase converts precalidodehydroaustin into calidodehydroaustin. The polypeptide is Austinoid biosynthesis cluster protein H (Aspergillus calidoustus).